Consider the following 447-residue polypeptide: Glyceraldehyde-3-phosphate dehydrogenase GAPB, chloroplastic (447 aa).

Residues 1–80 (MATHAALAVS…STPVRGETVA (80 aa)) constitute a chloroplast transit peptide. NADP(+) is bound by residues 91 to 92 (RI), aspartate 115, and arginine 160. D-glyceraldehyde 3-phosphate-binding positions include 234 to 236 (SCT), threonine 265, arginine 280, 293 to 294 (TG), and arginine 316. Cysteine 235 serves as the catalytic Nucleophile. Asparagine 399 lines the NADP(+) pocket.

This sequence belongs to the glyceraldehyde-3-phosphate dehydrogenase family. In terms of assembly, tetramer of either four A chains (GAPDH 2) or two A and two B chains (GAPDH 1). Expressed in leaves and stems.

It is found in the plastid. The protein resides in the chloroplast membrane. The protein localises to the chloroplast stroma. It catalyses the reaction D-glyceraldehyde 3-phosphate + phosphate + NADP(+) = (2R)-3-phospho-glyceroyl phosphate + NADPH + H(+). Its pathway is carbohydrate biosynthesis; Calvin cycle. Involved in the photosynthetic reductive pentose phosphate pathway (Calvin-Benson cycle). Catalyzes the reduction of 1,3-diphosphoglycerate by NADPH. This is Glyceraldehyde-3-phosphate dehydrogenase GAPB, chloroplastic (GAPB) from Arabidopsis thaliana (Mouse-ear cress).